A 696-amino-acid polypeptide reads, in one-letter code: MSVFVMEIGTEELPARFLSGLEQEIASRFEAALAAANVEFGTLNVQSTPRRLALTIENIDAVQREAEEVVSGPPVRIAFDAQGRPTKAAEGFARTQGAELDELFTLTTDKGEYLAVRKKTGGRPVQEILSEVAPEIIAALPFPKKMKWGSGDFTFGRPLRWVLALFDSEVVSFTVAGIVSGNETCGHRVHGPGPFEVSGADAYAGTVRDKCHVTLCAADRRRVTVEGGDALAAQAGGRILWKDSLLDEVQGLCEHPVPCLGDFDPSFLELPAEVLLTSMESHQKSFGVAAADGSLMPHFLTVLNMTPQNSALVKKGWERVLRARLEDARFFWKADLASDFDSWLAKLDNVIFLAPLGSMGDKTRRLERLCRWLAAAVAPDIQEQAARAGRLSKADLVSEMVYEFDSLQGIMGGIYARRKGEDEIVAQAVSEQYLPAGPESPVPDSLCGALLSIADKADTLAGCFGLSMIPTGAADPYALRRCALGIARIMLEKGLRFDVRELFRYAQEGYGERQWKLKPEQAAEKLHEFFVLRLKNLFVSQGHETLLVEAALHAGADDVWAAGARLEALDRFSKSAEFGQAVLTFKRAANIIRKQGQEEDGGLDGCYDASLFEDEAEKALAGALEDIAPDFEARWAADDYHALFGLLGVLRPAVDAFFDSVMVMCEDPHIRRNRLNLLQSLVQRLGRLADFGALQM.

It belongs to the class-II aminoacyl-tRNA synthetase family. In terms of assembly, tetramer of two alpha and two beta subunits.

The protein resides in the cytoplasm. The enzyme catalyses tRNA(Gly) + glycine + ATP = glycyl-tRNA(Gly) + AMP + diphosphate. The chain is Glycine--tRNA ligase beta subunit from Oleidesulfovibrio alaskensis (strain ATCC BAA-1058 / DSM 17464 / G20) (Desulfovibrio alaskensis).